The chain runs to 530 residues: Bifunctional purine biosynthesis protein PurH (530 aa).

In terms of domain architecture, MGS-like spans 1–148; sequence MNNPRPIRRA…KNHKDVTIVV (148 aa).

This sequence belongs to the PurH family.

The catalysed reaction is (6R)-10-formyltetrahydrofolate + 5-amino-1-(5-phospho-beta-D-ribosyl)imidazole-4-carboxamide = 5-formamido-1-(5-phospho-D-ribosyl)imidazole-4-carboxamide + (6S)-5,6,7,8-tetrahydrofolate. The enzyme catalyses IMP + H2O = 5-formamido-1-(5-phospho-D-ribosyl)imidazole-4-carboxamide. The protein operates within purine metabolism; IMP biosynthesis via de novo pathway; 5-formamido-1-(5-phospho-D-ribosyl)imidazole-4-carboxamide from 5-amino-1-(5-phospho-D-ribosyl)imidazole-4-carboxamide (10-formyl THF route): step 1/1. Its pathway is purine metabolism; IMP biosynthesis via de novo pathway; IMP from 5-formamido-1-(5-phospho-D-ribosyl)imidazole-4-carboxamide: step 1/1. This Aliivibrio salmonicida (strain LFI1238) (Vibrio salmonicida (strain LFI1238)) protein is Bifunctional purine biosynthesis protein PurH.